Reading from the N-terminus, the 391-residue chain is Cold-shock protein CS120 (391 aa).

Repeat copies occupy residues 9–31, 49–62, 72–94, 95–108, 115–128, 135–148, 156–178, 179–192, 199–212, 220–242, 243–256, 263–276, 284–306, 307–320, 327–340, 350–363, and 374–391. Residues 9–391 form a 6 X 23 AA approximate repeats region; it reads GEKKGIMEKI…KIKDKLPGQH (383 aa). Positions 21–33 are enriched in basic and acidic residues; it reads KLPGGHGDHKETA. The interval 21–391 is disordered; that stretch reads KLPGGHGDHK…KIKDKLPGQH (371 aa). Over residues 34–59 the composition is skewed to low complexity; sequence GTHGHPGTATHGAPATGGAYGQQGHA. The 11 X 14 AA approximate repeats stretch occupies residues 49-363; sequence TGGAYGQQGH…HGQHGHTGTT (315 aa). Residues 70–92 show a composition bias toward basic and acidic residues; it reads HAGEKKGVMENIKDKLPGGHQDH. The segment covering 93 to 145 has biased composition (low complexity); the sequence is QQTGGTYGQQGHTGTATHGTPATGGTYGQQGHTGTATHGTPATGGTYGEQGHT. The span at 155–176 shows a compositional bias: basic and acidic residues; sequence TGEKKGVMENIKEKLPGGHGDH. The span at 177 to 196 shows a compositional bias: low complexity; that stretch reads QQTGGTYGQQGHTGTATHGT. The span at 219 to 240 shows a compositional bias: basic and acidic residues; sequence TGEKKGVMENIKDKLPGGHGDH. Low complexity-rich tracts occupy residues 241–260 and 272–282; these read QQTG…TQGT and HTGMTGAGTHS. The segment covering 283-304 has biased composition (basic and acidic residues); the sequence is TGEKKGVMENIKEKLPGGHSDH. 2 stretches are compositionally biased toward low complexity: residues 305-324 and 333-351; these read QQTG…THGT and QHGH…TATG. Positions 361-372 are enriched in gly residues; that stretch reads GTTGTGTHGSDG. Over residues 373–391 the composition is skewed to basic and acidic residues; that stretch reads IGEKKSLMDKIKDKLPGQH.

It belongs to the plant dehydrin family.

Functionally, may reduce intracellular freezing damage during winter by hydrogen-bonding to the lattice of the nascent ice crystals, thus modifying the structure and/or propagation of ice crystals. This is Cold-shock protein CS120 (CS120) from Triticum aestivum (Wheat).